Consider the following 449-residue polypeptide: Tubulin alpha-2 chain (449 aa).

GTP-binding residues include glutamine 11, glutamate 71, serine 140, glycine 144, threonine 145, threonine 179, asparagine 206, and asparagine 228. Glutamate 71 serves as a coordination point for Mg(2+). Glutamate 254 is a catalytic residue.

This sequence belongs to the tubulin family. Dimer of alpha and beta chains. A typical microtubule is a hollow water-filled tube with an outer diameter of 25 nm and an inner diameter of 15 nM. Alpha-beta heterodimers associate head-to-tail to form protofilaments running lengthwise along the microtubule wall with the beta-tubulin subunit facing the microtubule plus end conferring a structural polarity. Microtubules usually have 13 protofilaments but different protofilament numbers can be found in some organisms and specialized cells. The cofactor is Mg(2+).

It is found in the cytoplasm. It localises to the cytoskeleton. It carries out the reaction GTP + H2O = GDP + phosphate + H(+). Tubulin is the major constituent of microtubules, a cylinder consisting of laterally associated linear protofilaments composed of alpha- and beta-tubulin heterodimers. Microtubules grow by the addition of GTP-tubulin dimers to the microtubule end, where a stabilizing cap forms. Below the cap, tubulin dimers are in GDP-bound state, owing to GTPase activity of alpha-tubulin. The protein is Tubulin alpha-2 chain (tub1) of Schizosaccharomyces pombe (strain 972 / ATCC 24843) (Fission yeast).